The chain runs to 141 residues: Hemoglobin subunit alpha-A (141 aa).

Residues 1–141 (VLSASDKSNV…VGTVLTAKYR (141 aa)) enclose the Globin domain. His58 is an O2 binding site. His87 serves as a coordination point for heme b.

The protein belongs to the globin family. Heterotetramer of two alpha chains and two beta chains. Red blood cells.

Its function is as follows. Involved in oxygen transport from the lung to the various peripheral tissues. The polypeptide is Hemoglobin subunit alpha-A (HBAA) (Streptopelia orientalis (Eastern turtle dove)).